The chain runs to 211 residues: Transcriptional regulator GfcR (211 aa).

The protein belongs to the purine/pyrimidine phosphoribosyltransferase family. GfcR subfamily.

Its function is as follows. DNA-binding transcriptional regulator that functions as a regulator of central sugar catabolic pathways. This Halorubrum lacusprofundi (strain ATCC 49239 / DSM 5036 / JCM 8891 / ACAM 34) protein is Transcriptional regulator GfcR.